A 79-amino-acid polypeptide reads, in one-letter code: Small serum protein 3 (79 aa).

The first 19 residues, 1–19 (MKVFFILIIFSFTLATCQG), serve as a signal peptide directing secretion. Cystine bridges form between cysteine 21–cysteine 72, cysteine 39–cysteine 64, and cysteine 62–cysteine 71.

The protein localises to the secreted. Functionally, shows an slight inhibitory effect toward the metalloproteinase brevilysin H6, but does not inhibit the metalloproteinases thermolysin, HR1A and HR1B. The chain is Small serum protein 3 from Protobothrops flavoviridis (Habu).